Consider the following 427-residue polypeptide: Protein king tubby 1 (427 aa).

The interval 48 to 174 (SPSNPDQIIS…ASGHNDAEGD (127 aa)) is disordered. Over residues 57 to 86 (SSSGSPTTVTATGTGTTTTTGSVTTTPTSP) the composition is skewed to low complexity.

This sequence belongs to the TUB family.

Its subcellular location is the cytoplasm. It localises to the nucleus. The chain is Protein king tubby 1 (king-tubby1) from Culex quinquefasciatus (Southern house mosquito).